The sequence spans 325 residues: Tryptophan--tRNA ligase (325 aa).

Residues 9–11 (QPS) and 17–18 (GN) each bind ATP. The 'HIGH' region signature appears at 10–18 (PSGILHIGN). Aspartate 132 lines the L-tryptophan pocket. Residues 144-146 (GKD), valine 184, and 191-195 (KMSKS) contribute to the ATP site. Positions 191–195 (KMSKS) match the 'KMSKS' region motif.

Belongs to the class-I aminoacyl-tRNA synthetase family. Homodimer.

Its subcellular location is the cytoplasm. It carries out the reaction tRNA(Trp) + L-tryptophan + ATP = L-tryptophyl-tRNA(Trp) + AMP + diphosphate + H(+). In terms of biological role, catalyzes the attachment of tryptophan to tRNA(Trp). This is Tryptophan--tRNA ligase from Fusobacterium nucleatum subsp. nucleatum (strain ATCC 25586 / DSM 15643 / BCRC 10681 / CIP 101130 / JCM 8532 / KCTC 2640 / LMG 13131 / VPI 4355).